Consider the following 701-residue polypeptide: Polyribonucleotide nucleotidyltransferase (701 aa).

Positions 485 and 491 each coordinate Mg(2+). Positions 552-611 constitute a KH domain; sequence PRITTLKINPEKIRDVIGKGGATIRALTEETGTTIELEDDGTVKIASSNGEATKEAIRRI. Positions 621 to 689 constitute an S1 motif domain; sequence GTVYNGKVVR…RQGRVRLSMK (69 aa).

It belongs to the polyribonucleotide nucleotidyltransferase family. In terms of assembly, component of the RNA degradosome, which is a multiprotein complex involved in RNA processing and mRNA degradation. Requires Mg(2+) as cofactor.

It is found in the cytoplasm. The catalysed reaction is RNA(n+1) + phosphate = RNA(n) + a ribonucleoside 5'-diphosphate. Functionally, involved in mRNA degradation. Catalyzes the phosphorolysis of single-stranded polyribonucleotides processively in the 3'- to 5'-direction. This is Polyribonucleotide nucleotidyltransferase from Shewanella piezotolerans (strain WP3 / JCM 13877).